We begin with the raw amino-acid sequence, 145 residues long: Transcriptional regulator MraZ (145 aa).

2 SpoVT-AbrB domains span residues 5–50 (TFNH…ALPQ) and 81–124 (AHEV…DKAA).

The protein belongs to the MraZ family. As to quaternary structure, forms oligomers.

It is found in the cytoplasm. The protein resides in the nucleoid. This Anaeromyxobacter sp. (strain Fw109-5) protein is Transcriptional regulator MraZ.